The primary structure comprises 249 residues: Triosephosphate isomerase (249 aa).

9-11 (NWK) serves as a coordination point for substrate. The active-site Electrophile is His-94. The active-site Proton acceptor is the Glu-166. Substrate contacts are provided by residues Gly-172, Ser-212, and 233–234 (GG).

Belongs to the triosephosphate isomerase family. Homodimer.

The protein localises to the cytoplasm. The catalysed reaction is D-glyceraldehyde 3-phosphate = dihydroxyacetone phosphate. It participates in carbohydrate biosynthesis; gluconeogenesis. It functions in the pathway carbohydrate degradation; glycolysis; D-glyceraldehyde 3-phosphate from glycerone phosphate: step 1/1. Functionally, involved in the gluconeogenesis. Catalyzes stereospecifically the conversion of dihydroxyacetone phosphate (DHAP) to D-glyceraldehyde-3-phosphate (G3P). In Treponema pallidum (strain Nichols), this protein is Triosephosphate isomerase.